The primary structure comprises 503 residues: Probable cytosol aminopeptidase (503 aa).

2 residues coordinate Mn(2+): Lys270 and Asp275. Lys282 is an active-site residue. Residues Asp293, Asp352, and Glu354 each contribute to the Mn(2+) site. The active site involves Arg356.

The protein belongs to the peptidase M17 family. The cofactor is Mn(2+).

It localises to the cytoplasm. The catalysed reaction is Release of an N-terminal amino acid, Xaa-|-Yaa-, in which Xaa is preferably Leu, but may be other amino acids including Pro although not Arg or Lys, and Yaa may be Pro. Amino acid amides and methyl esters are also readily hydrolyzed, but rates on arylamides are exceedingly low.. It carries out the reaction Release of an N-terminal amino acid, preferentially leucine, but not glutamic or aspartic acids.. Functionally, presumably involved in the processing and regular turnover of intracellular proteins. Catalyzes the removal of unsubstituted N-terminal amino acids from various peptides. The protein is Probable cytosol aminopeptidase of Shigella flexneri.